A 923-amino-acid chain; its full sequence is MPFAIGQRWLSESENALGLGVITALDQRTVTIYFPAADETRIYAMAQAPLSRIVFSKGETLSHQAGWQGEILDVQNMNGLLFYLVKNPQDEDVIVQERDISPIISFSQAKDRLFSAQIDRSTHFALRYRTLCHQQAQFKSPLRGLRGTRASLIPHQLHIAAEVGNRVNPRVLLADEVGLGKTIEAGMILQNQLFAEKVQRVLIIVPETLQHQWLVEMLRRFNLHFALFDEERCNDFDLDAVNPFTTESLIICSLNWLETHPNRVELVLNAQFDCLIVDEAHHLVWSETSPSTAYLLVEQLARIIPSVLLLTATPEQLGQESHFARLRLLDPERFFDYQTFVKEQEHYQPVVNAVESLLANKALSAVEKNHISDLLLEQDVEPLFKAIASNNDEEQQRARQELIQALIDRHGTGRMLFRNTRQGVKGFPHRVYHQITLSEENDKIDWLIDFLKLHRNEKIFVICQTAATAIQLEQILREREAIRAAVFHEKMSIIERDRAAAYFADLENGAQVLLSSSIGSEGRNFQFAANLVLFDLPTNPDLLEQCIGRLDRIGQKRDVQVYVPCAKDSPQSRLARWYNEGLNAFEQTCPMGMALFSQFADELEKVRSNSTALSENEFSGLLKQTKTAREKLKIELEKGRDRLLELNSHGGEQAQALADQIADEDNSPELVNFALKLFDIIGVEQEDLGANSIVISPTGTMLVPDFPGLKEEGVTVTFDRELALAREEMEFLTWDHPMIRQGIDLVASGDIGKAAMALLVNKQLPAGTLLIELIYVVESQSPKGLQLNRFLPPTPIRLLLDNKGNNIGEQVAFETLHSKLKPLGKNITNQMVKMARSNIESLIMRGDQLVKSLAEPIIAEAKNQADQQLSAEINRLQALRAVNKNIRQSEIDILEQQRTQSLDELSKANWRLDCLRVIVTNKE.

Residues 162 to 332 form the Helicase ATP-binding domain; it reads EVGNRVNPRV…FARLRLLDPE (171 aa). 175–182 is a binding site for ATP; it reads DEVGLGKT. Residues 278–281 carry the DEAH box motif; the sequence is DEAH. Residues 443 to 597 form the Helicase C-terminal domain; it reads KIDWLIDFLK…TCPMGMALFS (155 aa).

Belongs to the SNF2/RAD54 helicase family. RapA subfamily. In terms of assembly, interacts with the RNAP. Has a higher affinity for the core RNAP than for the holoenzyme. Its ATPase activity is stimulated by binding to RNAP.

Functionally, transcription regulator that activates transcription by stimulating RNA polymerase (RNAP) recycling in case of stress conditions such as supercoiled DNA or high salt concentrations. Probably acts by releasing the RNAP, when it is trapped or immobilized on tightly supercoiled DNA. Does not activate transcription on linear DNA. Probably not involved in DNA repair. This Haemophilus influenzae (strain ATCC 51907 / DSM 11121 / KW20 / Rd) protein is RNA polymerase-associated protein RapA.